Consider the following 748-residue polypeptide: MPEQPRRPSDQEQNQSETGPPTNKRRRIGLACNACRSRKSRCDGQRPSCSSCLSLGFDCMYEPGDSATNVIVRKDYVTDLEQRVSSVEHNLQRLNDVLKGHLSPCTNANTSPCHHGTINAGPSMPSPAPTAPTKASAPSGARTGTCATSLEEPQDEEGIPNGMAMTFVEEKTSAFYGEASNINFTQLLLRAIAVAHDSPGAPSGLDRASVLGESVVASVSQSKSSLGGTATPFDSLPTALPSVEEMDTLLDLYFDTAGVVFPFIHEETMRKTYNECRLNGFTRARRTWLGTLNMVFAMASNFDRDYTTSSKKRFERSNIFYKRAMGLCNELSKRVISLEIVHYLILVVLHCQGTSRSVQAWNNYGLVIRSAMALGLHAESTERALNPVQKEYRRRTWVVIYCLDKVLSTAVGRPASIPDEQMMRREPSSGRSPATSGNAADLPGDFLAVSFRMYQVMSKSLVIQYGANLDHDSELDEMAHLKASGELRKQLRLWAANLPPHLQLCDVESDVLLQNTKANRLRVILTMRYHNLSILIHKPLLSATILHLFRQGDAANDASSYLIQLAMAEAHECIRSAQLTIDIVHSVITVDATSKNNLGVWYFTLYYVFTASLVICGRLLWAQHGDTVVDEASASHMRFLLGKAETIFLNLDHENSLVLSCLEYVRRLSRMCGIRETGPDAASASIHDNGSNSTGSADAMSFDLDNMDPFQLFASEMFDPAIFDHFNQSPVDGMSFVNGLWDGFPCGG.

The span at 1–10 shows a compositional bias: basic and acidic residues; that stretch reads MPEQPRRPSD. Residues 1–26 are disordered; it reads MPEQPRRPSDQEQNQSETGPPTNKRR. Polar residues predominate over residues 11-21; it reads QEQNQSETGPP. The zn(2)-C6 fungal-type DNA-binding region spans 32 to 59; that stretch reads CNACRSRKSRCDGQRPSCSSCLSLGFDC. Disordered regions lie at residues 116–160 and 417–438; these read GTIN…EGIP and IPDEQMMRREPSSGRSPATSGN. The span at 131-141 shows a compositional bias: low complexity; the sequence is APTKASAPSGA. The span at 429-438 shows a compositional bias: polar residues; the sequence is SGRSPATSGN.

It is found in the nucleus. Transcription factor; part of the Fusarium detoxification of benzoxazolinone cluster 2 (FDB2) involved in the degradation of benzoxazolinones produced by the host plant. Maize, wheat, and rye produce the 2 benzoxazinone phytoanticipins 2,4-dihy-droxy-7-methoxy-1,4-benzoxazin-3-one (DIMBOA) and 2,4-dihydroxy-1,4-benzoxazin-3-one (DIBOA) that, due to their inherent instability once released, spontaneously degrade to the more stable corresponding benzoxazolinones, 6-methoxy-2-benzoxazolinone (MBOA) and 2-benzoxazolinone (BOA), respectively. FDB3 is not essentiel, but contributes to efficient BOA biotransformation. This is Transcription factor FBD3 from Gibberella moniliformis (strain M3125 / FGSC 7600) (Maize ear and stalk rot fungus).